We begin with the raw amino-acid sequence, 207 residues long: Ribonuclease HII (207 aa).

The RNase H type-2 domain occupies 20–207 (QLFAGVDEVG…KPVKRVLGIE (188 aa)). Positions 26, 27, and 118 each coordinate a divalent metal cation.

Belongs to the RNase HII family. It depends on Mn(2+) as a cofactor. Mg(2+) serves as cofactor.

It is found in the cytoplasm. The catalysed reaction is Endonucleolytic cleavage to 5'-phosphomonoester.. Endonuclease that specifically degrades the RNA of RNA-DNA hybrids. The sequence is that of Ribonuclease HII from Aliivibrio fischeri (strain ATCC 700601 / ES114) (Vibrio fischeri).